The following is a 368-amino-acid chain: 3-dehydroquinate synthase (368 aa).

NAD(+)-binding positions include 71–76, 105–109, 129–130, lysine 142, lysine 151, and 169–172; these read DGEAFK, GVVGD, TT, and TLRT. Glutamate 184, histidine 247, and histidine 264 together coordinate Zn(2+).

It belongs to the sugar phosphate cyclases superfamily. Dehydroquinate synthase family. Co(2+) is required as a cofactor. Zn(2+) serves as cofactor. The cofactor is NAD(+).

The protein localises to the cytoplasm. It carries out the reaction 7-phospho-2-dehydro-3-deoxy-D-arabino-heptonate = 3-dehydroquinate + phosphate. Its pathway is metabolic intermediate biosynthesis; chorismate biosynthesis; chorismate from D-erythrose 4-phosphate and phosphoenolpyruvate: step 2/7. Catalyzes the conversion of 3-deoxy-D-arabino-heptulosonate 7-phosphate (DAHP) to dehydroquinate (DHQ). The chain is 3-dehydroquinate synthase from Cupriavidus taiwanensis (strain DSM 17343 / BCRC 17206 / CCUG 44338 / CIP 107171 / LMG 19424 / R1) (Ralstonia taiwanensis (strain LMG 19424)).